The chain runs to 351 residues: tRNA-specific 2-thiouridylase MnmA (351 aa).

ATP contacts are provided by residues 7 to 14 (GLSGGVDS) and Leu-33. Residue Cys-94 is the Nucleophile of the active site. Cys-94 and Cys-193 are disulfide-bonded. Gly-119 is an ATP binding site. Residues 143 to 145 (KDQ) are interaction with tRNA. The Cysteine persulfide intermediate role is filled by Cys-193. The segment at 298–299 (RY) is interaction with tRNA.

Belongs to the MnmA/TRMU family.

It localises to the cytoplasm. It carries out the reaction S-sulfanyl-L-cysteinyl-[protein] + uridine(34) in tRNA + AH2 + ATP = 2-thiouridine(34) in tRNA + L-cysteinyl-[protein] + A + AMP + diphosphate + H(+). In terms of biological role, catalyzes the 2-thiolation of uridine at the wobble position (U34) of tRNA, leading to the formation of s(2)U34. This chain is tRNA-specific 2-thiouridylase MnmA, found in Nostoc punctiforme (strain ATCC 29133 / PCC 73102).